Reading from the N-terminus, the 372-residue chain is Formylglycine-generating enzyme (372 aa).

The signal sequence occupies residues 1-31; it reads MAAPAREPALRCCIRLARVFLLLVLACEVAG. A disulfide bridge connects residues cysteine 48 and cysteine 50. The disordered stretch occupies residues 61–80; that stretch reads SSAAAQRYSREANAPGLTSG. A Ca(2+)-binding site is contributed by glutamate 128. N-linked (GlcNAc...) asparagine glycosylation occurs at asparagine 139. 2 disulfides stabilise this stretch: cysteine 216-cysteine 363 and cysteine 233-cysteine 344. Positions 257, 258, 271, 273, 291, 294, and 298 each coordinate Ca(2+). The Cu(2+) site is built by cysteine 334 and cysteine 339. Positions 339-358 are interaction with sulfatases; that stretch reads CYRYRCAARSQNTPDSSASN.

It belongs to the sulfatase-modifying factor family. In terms of assembly, monomer, homodimer and heterodimer with SUMF2. It depends on Cu(2+) as a cofactor. In terms of processing, N-glycosylated. Contains high-mannose-type oligosaccharides.

It localises to the endoplasmic reticulum lumen. The catalysed reaction is L-cysteinyl-[sulfatase] + 2 a thiol + O2 = an organic disulfide + 3-oxo-L-alanyl-[sulfatase] + hydrogen sulfide + H2O + H(+). Its pathway is protein modification; sulfatase oxidation. Its function is as follows. Oxidase that catalyzes the conversion of cysteine to 3-oxoalanine on target proteins, using molecular oxygen and an unidentified reducing agent. 3-oxoalanine modification, which is also named formylglycine (fGly), occurs in the maturation of arylsulfatases and some alkaline phosphatases that use the hydrated form of 3-oxoalanine as a catalytic nucleophile. Known substrates include GALNS, ARSA, STS and ARSE. The polypeptide is Formylglycine-generating enzyme (Mus musculus (Mouse)).